The sequence spans 936 residues: MTDYKDTLNLPQTDFPMRANLPEREPQTLARWQTLDLYRKIRKDREGQPKFILHDGPPYANGRAHLGTAFNKTLKDIVVKSKTLSGFDAPFVPGWDCHGLPIELNVEKKLGKDKLSANAFRQACRDYAFSQIELQRDDFQRLGVLGDWQHPYLTMDFGYEADTVRALAKIVANGHLLRGQKPVHWCAACGSALAEAEVEYRDKASPAVDVGFEAVDAEAVRQRFGVKNATTRVLVPIWTTTPWTLPANEAVSVHPELHYALVKSELQNQPVYLILAKDLVDSAMQRYGVDDYEVHGNLKGDALEGMQLQHPFLDRIVPIILGEHVTTEAGTGNVHTAPAHGLEDYFVAEKYNLPINNPVDARGRFIPDTFLVGGQPVFKANEPIIVLLADSGHLLHSETIQHSYPHCWRHKTPLIFRATPQWFIGMNKNGLRERALAEIEKVTWLPAWGEARIGKMVADRPDWCISRQRLWGIPIPLFIHKKSGELHPKSPALMEKVAQLIEKESVDAWFDLDPKVLLGDDADHYEKVTDVLDVWFDSGVTHFCVLEKRRELKVPADIYLEGSDQHRGWFQSSLLTSLAIRDKAPYKSVLTYGFVVDSQGRKMSKSLGNVILPADVVKNLGADVLRLWAASMDYTVEVNVSDEILKRASDAYRRIRNTARFLLSNLYDFDPKKDKVAVDQLVALDRWAIFTTQKLQEKIITAYDRYRFPAIYQAIHNFCTVEMGSFYLDIIKDRLYTSKESGLPRRSAQTALYYIAEAFVRWIAPIISFTADEIWQFMPGDREPSVFLTQWFSDFPNAALSGEEEQRWQLLLQIRDEVNKALETYRNEGKIGSALAAEVVLYADERLNAAIATLGEELRFVLITSEASVLPFNEKSKAAFDTALPGLALEINVSEFEKCARCWQRRSSVGQIKEHADLCDRCVSNAFEDGEMRQFA.

A 'HIGH' region motif is present at residues 58-68 (PYANGRAHLGT). Residue E561 participates in L-isoleucyl-5'-AMP binding. Positions 602–606 (KMSKS) match the 'KMSKS' region motif. K605 contributes to the ATP binding site. The Zn(2+) site is built by C899, C902, C919, and C922.

The protein belongs to the class-I aminoacyl-tRNA synthetase family. IleS type 1 subfamily. Monomer. Requires Zn(2+) as cofactor.

It localises to the cytoplasm. The enzyme catalyses tRNA(Ile) + L-isoleucine + ATP = L-isoleucyl-tRNA(Ile) + AMP + diphosphate. Its function is as follows. Catalyzes the attachment of isoleucine to tRNA(Ile). As IleRS can inadvertently accommodate and process structurally similar amino acids such as valine, to avoid such errors it has two additional distinct tRNA(Ile)-dependent editing activities. One activity is designated as 'pretransfer' editing and involves the hydrolysis of activated Val-AMP. The other activity is designated 'posttransfer' editing and involves deacylation of mischarged Val-tRNA(Ile). This Coxiella burnetii (strain CbuK_Q154) (Coxiella burnetii (strain Q154)) protein is Isoleucine--tRNA ligase.